Here is a 361-residue protein sequence, read N- to C-terminus: Peptide chain release factor 1 (361 aa).

Position 237 is an N5-methylglutamine (glutamine 237). The segment covering 287–297 has biased composition (basic and acidic residues); that stretch reads KQQKEQSDTRK. Positions 287 to 313 are disordered; sequence KQQKEQSDTRKSLVGSGDRSERIRTYN.

It belongs to the prokaryotic/mitochondrial release factor family. In terms of processing, methylated by PrmC. Methylation increases the termination efficiency of RF1.

It localises to the cytoplasm. Functionally, peptide chain release factor 1 directs the termination of translation in response to the peptide chain termination codons UAG and UAA. The protein is Peptide chain release factor 1 of Francisella tularensis subsp. tularensis (strain FSC 198).